The following is a 152-amino-acid chain: MFRGATLVNLDSKGRLAVPTRYREMLNEGSQGQMVCTIDLHQPCLLLYPLPEWEIIEQKLSRLSSMNPAERRVQRLLLGHASECQMDNAGRILLANTLRQQASLSKQVMLVGQFNKFELWDEQTWYQQVREDIDEERSSKQPLSERLQDLSL.

2 SpoVT-AbrB domains span residues 5-52 (ATLV…PLPE) and 81-124 (ASEC…DEQT).

The protein belongs to the MraZ family. In terms of assembly, forms oligomers.

It localises to the cytoplasm. The protein localises to the nucleoid. Negatively regulates its own expression and that of the subsequent genes in the proximal part of the division and cell wall (dcw) gene cluster. Acts by binding directly to DNA. May also regulate the expression of genes outside the dcw cluster. The sequence is that of Transcriptional regulator MraZ from Erwinia tasmaniensis (strain DSM 17950 / CFBP 7177 / CIP 109463 / NCPPB 4357 / Et1/99).